A 102-amino-acid polypeptide reads, in one-letter code: MDINIIEDKNNALLNRHEVKFDATFKGSTPSRLDVRGKLAAMLNVPLELVILQKFENTYGMSAANGYAKIYEDAARMKVVEKEYVLKRNELPEAEVVEEAGE.

It belongs to the eukaryotic ribosomal protein eS24 family.

The protein is Small ribosomal subunit protein eS24 of Methanococcoides burtonii (strain DSM 6242 / NBRC 107633 / OCM 468 / ACE-M).